Reading from the N-terminus, the 100-residue chain is NAD(P)H-quinone oxidoreductase subunit 4L, chloroplastic (100 aa).

Transmembrane regions (helical) follow at residues M1–I21, A29–N49, and I60–V80.

Belongs to the complex I subunit 4L family. As to quaternary structure, NDH is composed of at least 16 different subunits, 5 of which are encoded in the nucleus.

Its subcellular location is the plastid. The protein localises to the chloroplast thylakoid membrane. It carries out the reaction a plastoquinone + NADH + (n+1) H(+)(in) = a plastoquinol + NAD(+) + n H(+)(out). It catalyses the reaction a plastoquinone + NADPH + (n+1) H(+)(in) = a plastoquinol + NADP(+) + n H(+)(out). Its function is as follows. NDH shuttles electrons from NAD(P)H:plastoquinone, via FMN and iron-sulfur (Fe-S) centers, to quinones in the photosynthetic chain and possibly in a chloroplast respiratory chain. The immediate electron acceptor for the enzyme in this species is believed to be plastoquinone. Couples the redox reaction to proton translocation, and thus conserves the redox energy in a proton gradient. The protein is NAD(P)H-quinone oxidoreductase subunit 4L, chloroplastic of Physcomitrium patens (Spreading-leaved earth moss).